The primary structure comprises 451 residues: Phosphoglucosamine mutase (451 aa).

Residue serine 104 is the Phosphoserine intermediate of the active site. Mg(2+) contacts are provided by serine 104, aspartate 242, aspartate 244, and aspartate 246. A Phosphoserine modification is found at serine 104.

Belongs to the phosphohexose mutase family. It depends on Mg(2+) as a cofactor. Activated by phosphorylation.

The catalysed reaction is alpha-D-glucosamine 1-phosphate = D-glucosamine 6-phosphate. Functionally, catalyzes the conversion of glucosamine-6-phosphate to glucosamine-1-phosphate. This is Phosphoglucosamine mutase from Kocuria rhizophila (strain ATCC 9341 / DSM 348 / NBRC 103217 / DC2201).